Consider the following 221-residue polypeptide: uncharacterized protein (221 aa).

This is an uncharacterized protein from Shigella flexneri.